Here is a 546-residue protein sequence, read N- to C-terminus: CTP synthase (546 aa).

An amidoligase domain region spans residues 1 to 264; the sequence is MRYIVVTGGV…TKYIMKAMRL (264 aa). Ser-12 serves as a coordination point for CTP. Ser-12 is a binding site for UTP. Residues 13–18 and Asp-70 contribute to the ATP site; that span reads GLGKGI. Mg(2+) contacts are provided by Asp-70 and Glu-140. Residues 147–149, 185–190, and Lys-221 each bind CTP; these read DIE and KTKPTQ. UTP is bound by residues 185 to 190 and Lys-221; that span reads KTKPTQ. One can recognise a Glutamine amidotransferase type-1 domain in the interval 298-534; the sequence is GSQCTDPMKD…VEAMKAQRLR (237 aa). L-glutamine is bound at residue Gly-357. The active-site Nucleophile; for glutamine hydrolysis is Cys-384. L-glutamine contacts are provided by residues 385–388, Glu-408, and Arg-464; that span reads FGMQ. Catalysis depends on residues His-507 and Glu-509.

The protein belongs to the CTP synthase family. Homotetramer.

It catalyses the reaction UTP + L-glutamine + ATP + H2O = CTP + L-glutamate + ADP + phosphate + 2 H(+). The catalysed reaction is L-glutamine + H2O = L-glutamate + NH4(+). It carries out the reaction UTP + NH4(+) + ATP = CTP + ADP + phosphate + 2 H(+). It participates in pyrimidine metabolism; CTP biosynthesis via de novo pathway; CTP from UDP: step 2/2. Its activity is regulated as follows. Allosterically activated by GTP, when glutamine is the substrate; GTP has no effect on the reaction when ammonia is the substrate. The allosteric effector GTP functions by stabilizing the protein conformation that binds the tetrahedral intermediate(s) formed during glutamine hydrolysis. Inhibited by the product CTP, via allosteric rather than competitive inhibition. Functionally, catalyzes the ATP-dependent amination of UTP to CTP with either L-glutamine or ammonia as the source of nitrogen. Regulates intracellular CTP levels through interactions with the four ribonucleotide triphosphates. In Methanothrix thermoacetophila (strain DSM 6194 / JCM 14653 / NBRC 101360 / PT) (Methanosaeta thermophila), this protein is CTP synthase.